Here is a 545-residue protein sequence, read N- to C-terminus: Chaperonin GroEL (545 aa).

ATP is bound by residues 30 to 33 (TLGP), K51, 87 to 91 (DGTTT), G415, 479 to 481 (NAA), and D495.

Belongs to the chaperonin (HSP60) family. As to quaternary structure, forms a cylinder of 14 subunits composed of two heptameric rings stacked back-to-back. Interacts with the co-chaperonin GroES.

Its subcellular location is the cytoplasm. The enzyme catalyses ATP + H2O + a folded polypeptide = ADP + phosphate + an unfolded polypeptide.. Its function is as follows. Together with its co-chaperonin GroES, plays an essential role in assisting protein folding. The GroEL-GroES system forms a nano-cage that allows encapsulation of the non-native substrate proteins and provides a physical environment optimized to promote and accelerate protein folding. This chain is Chaperonin GroEL, found in Salmonella agona (strain SL483).